The sequence spans 264 residues: S-adenosylmethionine decarboxylase proenzyme (264 aa).

Serine 112 functions as the Schiff-base intermediate with substrate; via pyruvic acid in the catalytic mechanism. A Pyruvic acid (Ser); by autocatalysis modification is found at serine 112. Histidine 117 acts as the Proton acceptor; for processing activity in catalysis. Cysteine 140 (proton donor; for catalytic activity) is an active-site residue.

The protein belongs to the prokaryotic AdoMetDC family. Type 2 subfamily. In terms of assembly, heterooctamer of four alpha and four beta chains arranged as a tetramer of alpha/beta heterodimers. Pyruvate serves as cofactor. Post-translationally, is synthesized initially as an inactive proenzyme. Formation of the active enzyme involves a self-maturation process in which the active site pyruvoyl group is generated from an internal serine residue via an autocatalytic post-translational modification. Two non-identical subunits are generated from the proenzyme in this reaction, and the pyruvate is formed at the N-terminus of the alpha chain, which is derived from the carboxyl end of the proenzyme. The post-translation cleavage follows an unusual pathway, termed non-hydrolytic serinolysis, in which the side chain hydroxyl group of the serine supplies its oxygen atom to form the C-terminus of the beta chain, while the remainder of the serine residue undergoes an oxidative deamination to produce ammonia and the pyruvoyl group blocking the N-terminus of the alpha chain.

It catalyses the reaction S-adenosyl-L-methionine + H(+) = S-adenosyl 3-(methylsulfanyl)propylamine + CO2. It participates in amine and polyamine biosynthesis; S-adenosylmethioninamine biosynthesis; S-adenosylmethioninamine from S-adenosyl-L-methionine: step 1/1. Functionally, catalyzes the decarboxylation of S-adenosylmethionine to S-adenosylmethioninamine (dcAdoMet), the propylamine donor required for the synthesis of the polyamines spermine and spermidine from the diamine putrescine. The protein is S-adenosylmethionine decarboxylase proenzyme of Yersinia enterocolitica serotype O:8 / biotype 1B (strain NCTC 13174 / 8081).